A 239-amino-acid polypeptide reads, in one-letter code: Leucyl/phenylalanyl-tRNA--protein transferase (239 aa).

It belongs to the L/F-transferase family.

It is found in the cytoplasm. The catalysed reaction is N-terminal L-lysyl-[protein] + L-leucyl-tRNA(Leu) = N-terminal L-leucyl-L-lysyl-[protein] + tRNA(Leu) + H(+). It carries out the reaction N-terminal L-arginyl-[protein] + L-leucyl-tRNA(Leu) = N-terminal L-leucyl-L-arginyl-[protein] + tRNA(Leu) + H(+). It catalyses the reaction L-phenylalanyl-tRNA(Phe) + an N-terminal L-alpha-aminoacyl-[protein] = an N-terminal L-phenylalanyl-L-alpha-aminoacyl-[protein] + tRNA(Phe). Functionally, functions in the N-end rule pathway of protein degradation where it conjugates Leu, Phe and, less efficiently, Met from aminoacyl-tRNAs to the N-termini of proteins containing an N-terminal arginine or lysine. The protein is Leucyl/phenylalanyl-tRNA--protein transferase of Aliivibrio fischeri (strain MJ11) (Vibrio fischeri).